Reading from the N-terminus, the 297-residue chain is Palmitoyl-protein thioesterase ABHD10, mitochondrial (297 aa).

The transit peptide at 1 to 43 (MAAWVPCRKWGWAAVSFGRHRGLIASLARKPPWAWWLSACRQK) directs the protein to the mitochondrion. In terms of domain architecture, AB hydrolase-1 spans 69–181 (IIFIPGYLSN…GVVTQFHSLP (113 aa)). Residues Ser143, Asp240, and His270 each act as charge relay system in the active site.

This sequence belongs to the AB hydrolase superfamily. In terms of tissue distribution, expressed in epididymal sperm but not in testicular sperm (at protein level).

It localises to the mitochondrion. The enzyme catalyses S-hexadecanoyl-L-cysteinyl-[protein] + H2O = L-cysteinyl-[protein] + hexadecanoate + H(+). It catalyses the reaction mycophenolic acid O-acyl-beta-D-glucuronide + H2O = mycophenolate + D-glucuronate + H(+). With respect to regulation, inhibited by palmostatin-B. Acts as an acyl-protein thioesterase that hydrolyzes fatty acids from acylated residues in proteins. Regulates the mitochondrial S-depalmitoylation of the nucleophilic active site residue of peroxiredoxin-5/PRDX5, a key antioxidant protein, therefore modulating mitochondrial antioxidant ability. Also catalyzes the deglucuronidation of mycophenolic acid acyl-glucuronide, an active metabolite of the immunosuppressant drug mycophenolate. The protein is Palmitoyl-protein thioesterase ABHD10, mitochondrial of Rattus norvegicus (Rat).